Consider the following 210-residue polypeptide: ATP phosphoribosyltransferase (210 aa).

This sequence belongs to the ATP phosphoribosyltransferase family. Short subfamily. In terms of assembly, heteromultimer composed of HisG and HisZ subunits.

It localises to the cytoplasm. The enzyme catalyses 1-(5-phospho-beta-D-ribosyl)-ATP + diphosphate = 5-phospho-alpha-D-ribose 1-diphosphate + ATP. The protein operates within amino-acid biosynthesis; L-histidine biosynthesis; L-histidine from 5-phospho-alpha-D-ribose 1-diphosphate: step 1/9. Its function is as follows. Catalyzes the condensation of ATP and 5-phosphoribose 1-diphosphate to form N'-(5'-phosphoribosyl)-ATP (PR-ATP). Has a crucial role in the pathway because the rate of histidine biosynthesis seems to be controlled primarily by regulation of HisG enzymatic activity. The sequence is that of ATP phosphoribosyltransferase (hisG) from Synechocystis sp. (strain ATCC 27184 / PCC 6803 / Kazusa).